Reading from the N-terminus, the 94-residue chain is Non-specific lipid-transfer protein 1 (94 aa).

Disulfide bonds link Cys-4–Cys-53, Cys-14–Cys-30, Cys-31–Cys-76, and Cys-51–Cys-90.

Plant non-specific lipid-transfer proteins transfer phospholipids as well as galactolipids across membranes. May play a role in wax or cutin deposition in the cell walls of expanding epidermal cells and certain secretory tissues. This is Non-specific lipid-transfer protein 1 from Amaranthus hypochondriacus (Prince-of-Wales feather).